The primary structure comprises 131 residues: Peptide methionine sulfoxide reductase MsrB (131 aa).

The region spanning 8–130 is the MsrB domain; sequence DAEWRAQLTD…NSVCLDLKRS (123 aa). C47, C50, C96, and C99 together coordinate Zn(2+). C119 acts as the Nucleophile in catalysis.

The protein belongs to the MsrB Met sulfoxide reductase family. Requires Zn(2+) as cofactor.

It catalyses the reaction L-methionyl-[protein] + [thioredoxin]-disulfide + H2O = L-methionyl-(R)-S-oxide-[protein] + [thioredoxin]-dithiol. The sequence is that of Peptide methionine sulfoxide reductase MsrB from Alkalilimnicola ehrlichii (strain ATCC BAA-1101 / DSM 17681 / MLHE-1).